A 180-amino-acid polypeptide reads, in one-letter code: Isopentenyl-diphosphate Delta-isomerase (180 aa).

Mn(2+) contacts are provided by H22 and H28. Residues 26–160 (LKHKAVSVFA…PERFTPWLKI (135 aa)) enclose the Nudix hydrolase domain. The active site involves C62. Position 62 (C62) interacts with Mg(2+). Residue H64 participates in Mn(2+) binding. Residue E82 coordinates Mg(2+). The Mn(2+) site is built by E108 and E110. E110 is a catalytic residue.

The protein belongs to the IPP isomerase type 1 family. Mg(2+) is required as a cofactor. Requires Mn(2+) as cofactor.

The protein resides in the cytoplasm. It carries out the reaction isopentenyl diphosphate = dimethylallyl diphosphate. Its pathway is isoprenoid biosynthesis; dimethylallyl diphosphate biosynthesis; dimethylallyl diphosphate from isopentenyl diphosphate: step 1/1. Catalyzes the 1,3-allylic rearrangement of the homoallylic substrate isopentenyl (IPP) to its highly electrophilic allylic isomer, dimethylallyl diphosphate (DMAPP). The chain is Isopentenyl-diphosphate Delta-isomerase from Ruegeria pomeroyi (strain ATCC 700808 / DSM 15171 / DSS-3) (Silicibacter pomeroyi).